A 328-amino-acid polypeptide reads, in one-letter code: Methionyl-tRNA formyltransferase (328 aa).

A (6S)-5,6,7,8-tetrahydrofolate-binding site is contributed by 110–113; it reads SLLP.

The protein belongs to the Fmt family.

The catalysed reaction is L-methionyl-tRNA(fMet) + (6R)-10-formyltetrahydrofolate = N-formyl-L-methionyl-tRNA(fMet) + (6S)-5,6,7,8-tetrahydrofolate + H(+). Functionally, attaches a formyl group to the free amino group of methionyl-tRNA(fMet). The formyl group appears to play a dual role in the initiator identity of N-formylmethionyl-tRNA by promoting its recognition by IF2 and preventing the misappropriation of this tRNA by the elongation apparatus. This chain is Methionyl-tRNA formyltransferase, found in Prochlorococcus marinus (strain MIT 9215).